Here is a 169-residue protein sequence, read N- to C-terminus: Peptide deformylase (169 aa).

2 residues coordinate Fe cation: cysteine 91 and histidine 133. Glutamate 134 is an active-site residue. Residue histidine 137 participates in Fe cation binding.

This sequence belongs to the polypeptide deformylase family. Fe(2+) is required as a cofactor.

It carries out the reaction N-terminal N-formyl-L-methionyl-[peptide] + H2O = N-terminal L-methionyl-[peptide] + formate. Functionally, removes the formyl group from the N-terminal Met of newly synthesized proteins. Requires at least a dipeptide for an efficient rate of reaction. N-terminal L-methionine is a prerequisite for activity but the enzyme has broad specificity at other positions. The protein is Peptide deformylase of Shigella boydii serotype 18 (strain CDC 3083-94 / BS512).